The sequence spans 625 residues: Glucose dehydrogenase [FAD, quinone] (625 aa).

The N-terminal stretch at 1–42 (MSASASACDCLVGVPTGPTLASTCGGSAFMLFMGLLEVFIRS) is a signal peptide. FAD is bound at residue 66 to 95 (DFIVIGGGSAGSVVASRLSEVPQWKVLLIE). H544 (proton acceptor) is an active-site residue. A non-standard amino acid (selenocysteine) is located at residue U613.

It belongs to the GMC oxidoreductase family. Requires FAD as cofactor.

The protein localises to the secreted. The catalysed reaction is a quinone + D-glucose = D-glucono-1,5-lactone + a quinol. Its function is as follows. Essential for cuticular modification during development. The chain is Glucose dehydrogenase [FAD, quinone] (Gld) from Drosophila melanogaster (Fruit fly).